The primary structure comprises 168 residues: Small ribosomal subunit protein uS5c (168 aa).

Residues 17–80 enclose the S5 DRBM domain; that stretch reads WSERVIQITR…SDCKKQIIEF (64 aa).

The protein belongs to the universal ribosomal protein uS5 family. In terms of assembly, part of the 30S ribosomal subunit. Contacts protein S4.

It localises to the plastid. It is found in the chloroplast. Its function is as follows. With S4 and S12 plays an important role in translational accuracy. This is Small ribosomal subunit protein uS5c (rps5) from Cyanidium caldarium (Red alga).